The chain runs to 234 residues: MALPWCLKTGVLTSPAAGFNHPSDSGFAVPTKLLSIRKGDRERLRIQAVFSFPPRNGGAEKRKQLKHELVEAIEPLERGATASPDDQLLIDQLARKVEAVNPTKEPLKSDLINGKWELIYTTSAAILQAKKPRFLRSLTNYQCINMDTLKVQRMETWPFYNSVTGDLTPLNSKTVAVKLQVFKILGFIPVKAPDGTARGELEITYVDEELRISRGKGNLLFILKMFDPTYRIPL.

The transit peptide at Met-1 to Arg-45 directs the protein to the chloroplast.

This sequence belongs to the PAP/fibrillin family.

The protein resides in the plastid. It is found in the chloroplast thylakoid. This Arabidopsis thaliana (Mouse-ear cress) protein is Probable plastid-lipid-associated protein 5, chloroplastic (PAP5).